The chain runs to 347 residues: Phenylalanine--tRNA ligase alpha subunit (347 aa).

Glutamate 265 provides a ligand contact to Mg(2+).

Belongs to the class-II aminoacyl-tRNA synthetase family. Phe-tRNA synthetase alpha subunit type 1 subfamily. Tetramer of two alpha and two beta subunits. The cofactor is Mg(2+).

Its subcellular location is the cytoplasm. It carries out the reaction tRNA(Phe) + L-phenylalanine + ATP = L-phenylalanyl-tRNA(Phe) + AMP + diphosphate + H(+). The chain is Phenylalanine--tRNA ligase alpha subunit from Mycolicibacterium gilvum (strain PYR-GCK) (Mycobacterium gilvum (strain PYR-GCK)).